The primary structure comprises 230 residues: tRNA (guanine-N(7)-)-methyltransferase (230 aa).

S-adenosyl-L-methionine is bound by residues glutamate 61, glutamate 86, aspartate 113, and aspartate 135. Aspartate 135 is a catalytic residue. Substrate-binding positions include lysine 139, aspartate 171, and 209–212 (TRYE).

The protein belongs to the class I-like SAM-binding methyltransferase superfamily. TrmB family.

It carries out the reaction guanosine(46) in tRNA + S-adenosyl-L-methionine = N(7)-methylguanosine(46) in tRNA + S-adenosyl-L-homocysteine. Its pathway is tRNA modification; N(7)-methylguanine-tRNA biosynthesis. Its function is as follows. Catalyzes the formation of N(7)-methylguanine at position 46 (m7G46) in tRNA. This Azorhizobium caulinodans (strain ATCC 43989 / DSM 5975 / JCM 20966 / LMG 6465 / NBRC 14845 / NCIMB 13405 / ORS 571) protein is tRNA (guanine-N(7)-)-methyltransferase.